The primary structure comprises 522 residues: Glutathione reductase, mitochondrial (522 aa).

A mitochondrion-targeting transit peptide spans 1 to 43 (MALLPRALSSGGRPSWRRAARASRGFPLPLPFPAAATHALSRA). FAD is bound by residues serine 74 and glycine 75. Serine 74 contacts glutathione. Arginine 81 is a binding site for glutathione. Glutamate 94 is a binding site for FAD. The residue at position 97 (lysine 97) is an N6-acetyllysine. FAD contacts are provided by threonine 101, cysteine 102, and lysine 110. A disulfide bond links cysteine 102 and cysteine 107. Tyrosine 158 contacts glutathione. Alanine 174 serves as a coordination point for FAD. Residues alanine 239, isoleucine 242, glutamate 245, arginine 262, arginine 268, and glycine 334 each contribute to the NADP(+) site. Aspartate 375 contributes to the FAD binding site. Position 381 (leucine 381) interacts with NADP(+). Threonine 383 lines the FAD pocket. Arginine 391 is a glutathione binding site. Valine 414 provides a ligand contact to NADP(+). Residue histidine 511 participates in FAD binding. The active-site Proton acceptor is the histidine 511.

Belongs to the class-I pyridine nucleotide-disulfide oxidoreductase family. In terms of assembly, homodimer; disulfide-linked. It depends on FAD as a cofactor.

The protein resides in the mitochondrion. The protein localises to the cytoplasm. The enzyme catalyses 2 glutathione + NADP(+) = glutathione disulfide + NADPH + H(+). Its function is as follows. Catalyzes the reduction of glutathione disulfide (GSSG) to reduced glutathione (GSH). Constitutes the major mechanism to maintain a high GSH:GSSG ratio in the cytosol. In Callithrix jacchus (White-tufted-ear marmoset), this protein is Glutathione reductase, mitochondrial (GSR).